A 331-amino-acid polypeptide reads, in one-letter code: Phenylalanine--tRNA ligase alpha subunit (331 aa).

E252 lines the Mg(2+) pocket.

The protein belongs to the class-II aminoacyl-tRNA synthetase family. Phe-tRNA synthetase alpha subunit type 1 subfamily. Tetramer of two alpha and two beta subunits. Mg(2+) is required as a cofactor.

It is found in the cytoplasm. The enzyme catalyses tRNA(Phe) + L-phenylalanine + ATP = L-phenylalanyl-tRNA(Phe) + AMP + diphosphate + H(+). The chain is Phenylalanine--tRNA ligase alpha subunit from Marinomonas sp. (strain MWYL1).